The sequence spans 495 residues: UDP-glycosyltransferase 73C10 (495 aa).

H24 (proton acceptor) is an active-site residue. H24 contributes to the an anthocyanidin binding site. Catalysis depends on D129, which acts as the Charge relay. Q358, H373, W376, N377, S378, and E381 together coordinate UDP-alpha-D-glucose. G396 provides a ligand contact to an anthocyanidin. 2 residues coordinate UDP-alpha-D-glucose: D397 and Q398.

It belongs to the UDP-glycosyltransferase family.

The catalysed reaction is oleanolate + UDP-alpha-D-glucose = oleanolate 3-O-beta-D-glucoside + UDP + H(+). Functionally, catalyzes the transfer of a glucose (Glc) moiety from UDP-Glc to the C-3 position of the oleanane sapogenins oleanolate and hederagenin, and to the C-28 carboxylic group of the lupane sapogenin betulinate. The monoglucosylated hederagenin 3-O-beta-D-glucoside is a feeding deterrent of the yellow-striped flea beetle (Phyllotreta nemorum). The polypeptide is UDP-glycosyltransferase 73C10 (Barbarea vulgaris (Yellow rocket)).